The sequence spans 622 residues: Threonine--tRNA ligase (622 aa).

The segment at Met-1 to Thr-136 is editing domain. The interval Pro-199–Pro-498 is catalytic. Zn(2+)-binding residues include Cys-291, His-343, and His-467.

Belongs to the class-II aminoacyl-tRNA synthetase family. As to quaternary structure, homodimer. It depends on Zn(2+) as a cofactor.

The protein localises to the cytoplasm. The catalysed reaction is tRNA(Thr) + L-threonine + ATP = L-threonyl-tRNA(Thr) + AMP + diphosphate + H(+). Catalyzes the attachment of threonine to tRNA(Thr) in a two-step reaction: L-threonine is first activated by ATP to form Thr-AMP and then transferred to the acceptor end of tRNA(Thr). Also edits incorrectly charged L-seryl-tRNA(Thr). The protein is Threonine--tRNA ligase of Methanococcus maripaludis (strain DSM 14266 / JCM 13030 / NBRC 101832 / S2 / LL).